Consider the following 370-residue polypeptide: MKSQSLIEDEIPVKENYAYQIPTSPLIVEVTPQERNILSNVGALLEKAFKSYENPDYIEALHLYSFQLLPERIARILSRFGTDFSADQYGAIIFRGLLEVDQDHLGPTPANWQSADYSKLNKYGFICSLLHGAVPSKPVQYYAQRKGGGILHAVIPDEKMAATQTGSGSKTNLYVHTEDAFLLHQADFLSFLYLRNEERVPSTLYSVRSHGKVNKIMEKLFDPIYQCPKDANYQEEINDGPLASVLYGNKKLPFIRFDAAEQIFNENAGQTPEALYNLTEFWNEAKELINSDYIPDSGDVIFVNNHLCAHGRSAFTAGQKEENGKLVPCERRQMLRMMSKTSLIHIRSMTHTDDPYFVMEEHLGKVFDQA.

Residues H176, E178, and H310 each contribute to the Fe cation site.

It belongs to the clavaminate synthase family. Requires Fe(2+) as cofactor.

It carries out the reaction L-lysine + 2-oxoglutarate + O2 = (4R)-4-hydroxy-L-lysine + succinate + CO2. Alpha-ketoglutarate-dependent dioxygenase that in vitro catalyzes the regio- and stereoselective hydroxylation of L-lysine, leading to (4R)-4-hydroxy-L-lysine. To a lesser extent, can also use (3S)-3-hydroxy-L-lysine as substrate, producing the dihydroxylated product (3R,4R)-3,4-hydroxy-L-lysine. Cannot use D-lysine or L-ornithine as substrate. This chain is L-lysine 4-hydroxylase, found in Flavobacterium johnsoniae (strain ATCC 17061 / DSM 2064 / JCM 8514 / BCRC 14874 / CCUG 350202 / NBRC 14942 / NCIMB 11054 / UW101) (Cytophaga johnsonae).